Consider the following 235-residue polypeptide: Peptidyl-tRNA hydrolase (235 aa).

Y14 serves as a coordination point for tRNA. H19 functions as the Proton acceptor in the catalytic mechanism. 3 residues coordinate tRNA: F64, N66, and N112. The tract at residues 188 to 235 (APARNSGTRPDNPGKGSPEKPAAKPANDPIAEPPSLSDRLRALTERFR) is disordered. Over residues 225-235 (DRLRALTERFR) the composition is skewed to basic and acidic residues.

This sequence belongs to the PTH family. As to quaternary structure, monomer.

The protein resides in the cytoplasm. It catalyses the reaction an N-acyl-L-alpha-aminoacyl-tRNA + H2O = an N-acyl-L-amino acid + a tRNA + H(+). Its function is as follows. Hydrolyzes ribosome-free peptidyl-tRNAs (with 1 or more amino acids incorporated), which drop off the ribosome during protein synthesis, or as a result of ribosome stalling. Catalyzes the release of premature peptidyl moieties from peptidyl-tRNA molecules trapped in stalled 50S ribosomal subunits, and thus maintains levels of free tRNAs and 50S ribosomes. This is Peptidyl-tRNA hydrolase from Paracoccus denitrificans (strain Pd 1222).